The primary structure comprises 240 residues: MKMSGFSIEEKVHEFESKGFLEISNEIFLQEEENHSLLTQAQLDYYNLEDDAYGECRARSYSRYIKYVDSPDYILDNSNDYFQSKEYNYDDGGKVRQFNSINDSFLCNPLIQNIVRFDTEFAFKTNIIDKSKDLIIGLHQVRYKATKERPSFSSPIWLHKDDEPVVFLHLMNLSNTAIGGDNLIANSPREINQFISLKEPLETLVFGQKVFHAVTPLGTECSTEAFRDILLVTFSYKETK.

Positions 159, 161, and 212 each coordinate Fe cation.

It belongs to the iron/ascorbate-dependent oxidoreductase family. Requires L-ascorbate as cofactor. It depends on Fe(2+) as a cofactor.

It carries out the reaction L-isoleucine + 2-oxoglutarate + O2 = (4S)-4-hydroxy-L-isoleucine + succinate + CO2. Catalyzes the hydroxylation of L-isoleucine to produce (4S)-4-hydroxy-L-isoleucine. Can also catalyze the hydroxylation of L-leucine, L-norvaline, L-norleucine and L-allo-isoleucine, as well as the sulfoxidation of L-methionine, L-ethionine, S-methyl-L-cysteine, S-ethyl-L-cysteine, and S-allyl-L-cysteine. In Bacillus thuringiensis, this protein is L-isoleucine-4-hydroxylase.